Here is a 70-residue protein sequence, read N- to C-terminus: Turripeptide Lol9.1 (70 aa).

The N-terminal stretch at 1 to 20 (MKVYCLLLVLLVGLVSQAHG) is a signal peptide. Positions 21 to 70 (KPTKRCLSVCSAEYEPVCGSDGKTYANKCHLMTEACWSPTSITLVHEGKC) constitute a Kazal-like domain. Cystine bridges form between Cys26-Cys56, Cys30-Cys49, and Cys38-Cys70.

The protein belongs to the conopeptide P-like superfamily. In terms of tissue distribution, expressed by the venom duct.

It is found in the secreted. Functionally, acts as a neurotoxin by inhibiting an ion channel. May also act as a serine protease inhibitor, since it possess the kazal serine protease inhibitor signature. This is Turripeptide Lol9.1 from Iotyrris olangoensis (Sea snail).